Consider the following 405-residue polypeptide: Cytochrome P450 107B1 (405 aa).

Cysteine 352 contributes to the heme binding site.

This sequence belongs to the cytochrome P450 family. Requires heme as cofactor.

The protein localises to the cytoplasm. Functionally, not known, probably involved in the catabolism of octane and guaiacol. It displays a weak activity in the O-dealkylation of 7-ethoxycoumarin. This chain is Cytochrome P450 107B1 (cyp107B1), found in Saccharopolyspora erythraea (strain ATCC 11635 / DSM 40517 / JCM 4748 / NBRC 13426 / NCIMB 8594 / NRRL 2338).